Consider the following 871-residue polypeptide: Alanine--tRNA ligase (871 aa).

Zn(2+) is bound by residues H561, H565, C662, and H666.

The protein belongs to the class-II aminoacyl-tRNA synthetase family. It depends on Zn(2+) as a cofactor.

The protein resides in the cytoplasm. It carries out the reaction tRNA(Ala) + L-alanine + ATP = L-alanyl-tRNA(Ala) + AMP + diphosphate. In terms of biological role, catalyzes the attachment of alanine to tRNA(Ala) in a two-step reaction: alanine is first activated by ATP to form Ala-AMP and then transferred to the acceptor end of tRNA(Ala). Also edits incorrectly charged Ser-tRNA(Ala) and Gly-tRNA(Ala) via its editing domain. This is Alanine--tRNA ligase from Dechloromonas aromatica (strain RCB).